The following is a 170-amino-acid chain: Ergosterol biosynthetic protein 28 (170 aa).

The next 3 membrane-spanning stretches (helical) occupy residues 7 to 27 (FLPE…IISI), 116 to 136 (TLAY…LFVF), and 141 to 161 (FGLP…WMPL).

It belongs to the ERG28 family. Heterotetramer of ERG25, ERG26, ERG27 and ERG28. ERG28 acts as a scaffold to tether ERG27 and other 4,4-demethylation-related enzymes, forming a demethylation enzyme complex, in the endoplasmic reticulum.

The protein localises to the endoplasmic reticulum membrane. Its pathway is steroid metabolism; ergosterol biosynthesis. In terms of biological role, sterol 24-C-methyltransferase; part of the third module of ergosterol biosynthesis pathway that includes the late steps of the pathway. ERG28 has a role as a scaffold to help anchor the catalytic components of the C-4 demethylation complex ERG25, ERG26 and ERG27 to the endoplasmic reticulum. The third module or late pathway involves the ergosterol synthesis itself through consecutive reactions that mainly occur in the endoplasmic reticulum (ER) membrane. Firstly, the squalene synthase ERG9 catalyzes the condensation of 2 farnesyl pyrophosphate moieties to form squalene, which is the precursor of all steroids. Squalene synthase is crucial for balancing the incorporation of farnesyl diphosphate (FPP) into sterol and nonsterol isoprene synthesis. Secondly, squalene is converted into lanosterol by the consecutive action of the squalene epoxidase ERG1 and the lanosterol synthase ERG7. Then, the delta(24)-sterol C-methyltransferase ERG6 methylates lanosterol at C-24 to produce eburicol. Eburicol is the substrate of the sterol 14-alpha demethylase encoded by CYP51A, CYP51B and CYP51C, to yield 4,4,24-trimethyl ergosta-8,14,24(28)-trienol. CYP51B encodes the enzyme primarily responsible for sterol 14-alpha-demethylation, and plays an essential role in ascospore formation. CYP51A encodes an additional sterol 14-alpha-demethylase, induced on ergosterol depletion and responsible for the intrinsic variation in azole sensitivity. The third CYP51 isoform, CYP51C, does not encode a sterol 14-alpha-demethylase, but is required for full virulence on host wheat ears. The C-14 reductase ERG24 then reduces the C14=C15 double bond which leads to 4,4-dimethylfecosterol. A sequence of further demethylations at C-4, involving the C-4 demethylation complex containing the C-4 methylsterol oxidases ERG25, the sterol-4-alpha-carboxylate 3-dehydrogenase ERG26 and the 3-keto-steroid reductase ERG27, leads to the production of fecosterol via 4-methylfecosterol. ERG28 has a role as a scaffold to help anchor ERG25, ERG26 and ERG27 to the endoplasmic reticulum. The C-8 sterol isomerase ERG2 then catalyzes the reaction which results in unsaturation at C-7 in the B ring of sterols and thus converts fecosterol to episterol. The sterol-C5-desaturases ERG3A and ERG3BB then catalyze the introduction of a C-5 double bond in the B ring to produce 5-dehydroepisterol. The C-22 sterol desaturases ERG5A and ERG5B further convert 5-dehydroepisterol into ergosta-5,7,22,24(28)-tetraen-3beta-ol by forming the C-22(23) double bond in the sterol side chain. Finally, ergosta-5,7,22,24(28)-tetraen-3beta-ol is substrate of the C-24(28) sterol reductase ERG4 to produce ergosterol. This chain is Ergosterol biosynthetic protein 28, found in Gibberella zeae (strain ATCC MYA-4620 / CBS 123657 / FGSC 9075 / NRRL 31084 / PH-1) (Wheat head blight fungus).